We begin with the raw amino-acid sequence, 559 residues long: 3-aminoavenalumate diazotase (559 aa).

Mg(2+) is bound at residue S181. The ATP site is built by A227, G332, and S336. E337 provides a ligand contact to Mg(2+). 2 residues coordinate ATP: D416 and R437.

Belongs to the ATP-dependent AMP-binding enzyme family. It depends on Mg(2+) as a cofactor.

The enzyme catalyses 3-aminoavenalumate + nitrite + ATP = 3-diazoavenalumate + AMP + diphosphate + H2O. It carries out the reaction (E)-3-aminocoumarate + nitrite + ATP + H(+) = (E)-3-diazocoumarate + AMP + diphosphate + H2O. It catalyses the reaction 3-amino-4-hydroxybenzoate + nitrite + ATP + H(+) = 3-diazo-4-hydroxybenzoate + AMP + diphosphate + H2O. Functionally, ligase involved in the biosynthesis of avenalumic acid (AVA). Catalyzes the diazotization of 3-aminoavenalumic acid (3-AAA) to 3-diazoavenalumic acid (3-DAA). It can also act on 3-aminocoumaric acid (3-ACA) and 3-amino-4-hydroxybenzoic acid (3,4-AHBA) with lower activity. The protein is 3-aminoavenalumate diazotase of Streptomyces sp.